The sequence spans 270 residues: 3-methyl-2-oxobutanoate hydroxymethyltransferase (270 aa).

Residues aspartate 50 and aspartate 89 each coordinate Mg(2+). Residues 50 to 51, aspartate 89, and lysine 118 each bind 3-methyl-2-oxobutanoate; that span reads DS. Residue glutamate 120 participates in Mg(2+) binding. The active-site Proton acceptor is glutamate 187.

The protein belongs to the PanB family. In terms of assembly, homodecamer; pentamer of dimers. Mg(2+) serves as cofactor.

The protein resides in the cytoplasm. It carries out the reaction 3-methyl-2-oxobutanoate + (6R)-5,10-methylene-5,6,7,8-tetrahydrofolate + H2O = 2-dehydropantoate + (6S)-5,6,7,8-tetrahydrofolate. It functions in the pathway cofactor biosynthesis; (R)-pantothenate biosynthesis; (R)-pantoate from 3-methyl-2-oxobutanoate: step 1/2. Catalyzes the reversible reaction in which hydroxymethyl group from 5,10-methylenetetrahydrofolate is transferred onto alpha-ketoisovalerate to form ketopantoate. This Helicobacter pylori (strain ATCC 700392 / 26695) (Campylobacter pylori) protein is 3-methyl-2-oxobutanoate hydroxymethyltransferase.